The sequence spans 93 residues: Pyrimidine/purine nucleoside phosphorylase (93 aa).

The protein belongs to the nucleoside phosphorylase PpnP family.

It carries out the reaction a purine D-ribonucleoside + phosphate = a purine nucleobase + alpha-D-ribose 1-phosphate. It catalyses the reaction adenosine + phosphate = alpha-D-ribose 1-phosphate + adenine. The enzyme catalyses cytidine + phosphate = cytosine + alpha-D-ribose 1-phosphate. The catalysed reaction is guanosine + phosphate = alpha-D-ribose 1-phosphate + guanine. It carries out the reaction inosine + phosphate = alpha-D-ribose 1-phosphate + hypoxanthine. It catalyses the reaction thymidine + phosphate = 2-deoxy-alpha-D-ribose 1-phosphate + thymine. The enzyme catalyses uridine + phosphate = alpha-D-ribose 1-phosphate + uracil. The catalysed reaction is xanthosine + phosphate = alpha-D-ribose 1-phosphate + xanthine. Its function is as follows. Catalyzes the phosphorolysis of diverse nucleosides, yielding D-ribose 1-phosphate and the respective free bases. Can use uridine, adenosine, guanosine, cytidine, thymidine, inosine and xanthosine as substrates. Also catalyzes the reverse reactions. This chain is Pyrimidine/purine nucleoside phosphorylase, found in Photobacterium profundum (strain SS9).